The sequence spans 189 residues: DnaJ homolog subfamily C member 5G (189 aa).

The 82-residue stretch at 17 to 98 (SLYAVLDLKK…KKRKIYDQHG (82 aa)) folds into the J domain. The interval 154–189 (PEQDSGRKYQQNVQSQPPRSGAKCDFRSEENSEDDF) is disordered. Residues 161 to 171 (KYQQNVQSQPP) show a composition bias toward polar residues.

Palmitoylated. As to expression, testis specific.

It localises to the membrane. The polypeptide is DnaJ homolog subfamily C member 5G (DNAJC5G) (Homo sapiens (Human)).